A 565-amino-acid chain; its full sequence is Thiol:disulfide interchange protein DsbD (565 aa).

The first 19 residues, 1-19, serve as a signal peptide directing secretion; it reads MAQRIFTLILLLCSTSVFA. Disulfide bonds link Cys-122-Cys-128 and Cys-182-Cys-304. 7 helical membrane passes run 163-183, 208-228, 243-263, 289-309, 323-343, 357-377, and 384-404; these read LPFS…TPCV, LLTF…GLVV, YVLI…FGLF, GVFI…TAPL, WLGG…LMLI, WMEQ…VFLL, and IWGL…AFIT. The region spanning 434-565 is the Thioredoxin domain; it reads WAFGETHTAQ…FSAHLRDRQP (132 aa). An intrachain disulfide couples Cys-480 to Cys-483.

The protein belongs to the thioredoxin family. DsbD subfamily.

It localises to the cell inner membrane. The enzyme catalyses [protein]-dithiol + NAD(+) = [protein]-disulfide + NADH + H(+). It carries out the reaction [protein]-dithiol + NADP(+) = [protein]-disulfide + NADPH + H(+). Functionally, required to facilitate the formation of correct disulfide bonds in some periplasmic proteins and for the assembly of the periplasmic c-type cytochromes. Acts by transferring electrons from cytoplasmic thioredoxin to the periplasm. This transfer involves a cascade of disulfide bond formation and reduction steps. The sequence is that of Thiol:disulfide interchange protein DsbD from Escherichia coli O6:K15:H31 (strain 536 / UPEC).